A 252-amino-acid polypeptide reads, in one-letter code: MLAKRIIPCLDVNAGRVVKGVNFVELRDAGDPVEIARRYDEQGADEITFLDITASSDARDIILHVVEQVAEQVFIPLTVGGGVRTVEDVRRLLNAGADKVSINTAAVNNPQVVAEAAGKVGSQCIVVAIDAKQTAPGRWQVFTHGGRNNTGLDAVEWAQKVAALGAGEILLTSMDRDGTKIGFDLGLTRAVADAVPIPVIASGGVGTLEHLAEGVSEGRADAVLAASIFHFGQHTVREAKELMRSRGIEVRL.

Catalysis depends on residues Asp-11 and Asp-130.

The protein belongs to the HisA/HisF family. In terms of assembly, heterodimer of HisH and HisF.

The protein localises to the cytoplasm. It carries out the reaction 5-[(5-phospho-1-deoxy-D-ribulos-1-ylimino)methylamino]-1-(5-phospho-beta-D-ribosyl)imidazole-4-carboxamide + L-glutamine = D-erythro-1-(imidazol-4-yl)glycerol 3-phosphate + 5-amino-1-(5-phospho-beta-D-ribosyl)imidazole-4-carboxamide + L-glutamate + H(+). The protein operates within amino-acid biosynthesis; L-histidine biosynthesis; L-histidine from 5-phospho-alpha-D-ribose 1-diphosphate: step 5/9. IGPS catalyzes the conversion of PRFAR and glutamine to IGP, AICAR and glutamate. The HisF subunit catalyzes the cyclization activity that produces IGP and AICAR from PRFAR using the ammonia provided by the HisH subunit. The protein is Imidazole glycerol phosphate synthase subunit HisF of Aromatoleum aromaticum (strain DSM 19018 / LMG 30748 / EbN1) (Azoarcus sp. (strain EbN1)).